The sequence spans 554 residues: Flavin-dependent halogenase ascD (554 aa).

FAD contacts are provided by G15, G18, and E48. Chloride is bound by residues S331 and G332. V333 provides a ligand contact to FAD.

Belongs to the flavin-dependent halogenase family.

It carries out the reaction ilicicolin B + FADH2 + chloride + O2 = ilicicolin A + FAD + 2 H2O + H(+). It functions in the pathway secondary metabolite biosynthesis; terpenoid biosynthesis. Functionally, flavin-dependent halogenase; part of the asc-1 gene cluster that mediates the biosynthesis of both ascochlorin and ascofuranone, a strong inhibitor of cyanide-insensitive alternative oxidases and a promising drug candidate against African trypanosomiasis. The first step in the pathway is performed by the non-reducing polyketide synthase ascC that produces orsellinic acid by condensing acetyl-CoA with 3 malonyl-CoA units. Orsellinic acid is then prenylated by the prenyltransferase ascA to yield ilicicolinic acid B. Ilicicolinic acid B is further reduced to ilicicolin B by the reductase ascB. The halogenase ascD then chlorinates ilicicolin B to produce ilicicolin A which is converted to ilicicolin A epoxide by the cytochrome P450 monooxygenase ascE that catalyzes stereoselective epoxidation of the terminal double bond of the prenyl group. Ilicicolin A epoxide is the last common precursor for the biosynthesis of ascofuranone and ascochlorin. The terpene cyclase ascF produces a monocyclic terpene, and the cyclization reaction is proposed to be initiated by protonation of the terminal epoxide of ilicicolin A epoxide to generate a monocyclic tertiarycation, which is followed by a series of hydride and methyl shifts with abstraction of proton, leading to the formation of the (14S,15R,19R)-trimethylcyclohexanone ring structure of ilicicolin C, which is finally reduced to ascochlorin by the dehydrogenase ascG. On the other hand, ilicicolin A epoxide is hydroxylated by the cytochrome P450 monooxygenase ascH, and the resultant product is cyclized by the terpene cyclase ascI to ascofuranol via protonation-initiated epoxide ring opening, which facilitates the 6-endo-tet cyclization to form the tetrahy-drofuran ring. Finally, ascofuranol is oxidized into ascofuranone by ascJ. This Acremonium egyptiacum (Oospora egyptiaca) protein is Flavin-dependent halogenase ascD.